We begin with the raw amino-acid sequence, 95 residues long: UPF0473 protein PEPE_1260 (95 aa).

This sequence belongs to the UPF0473 family.

This Pediococcus pentosaceus (strain ATCC 25745 / CCUG 21536 / LMG 10740 / 183-1w) protein is UPF0473 protein PEPE_1260.